Here is a 531-residue protein sequence, read N- to C-terminus: NADH-quinone oxidoreductase subunit N (531 aa).

Transmembrane regions (helical) follow at residues 8 to 28 (VEYF…AGVL), 41 to 61 (AQVT…IVVA), 81 to 101 (ATLF…VFMA), 146 to 166 (GATQ…MMVF), 172 to 192 (LLTM…MCGL), 208 to 228 (FLLG…LYGA), 250 to 270 (ALAG…AVPF), 282 to 302 (PTPI…GALL), 318 to 338 (PVLW…AVNQ), 350 to 370 (VAHV…GLSA), 372 to 392 (LFYL…VGLV), 418 to 438 (IVGV…LTSG), 453 to 473 (GAVP…YFYV), and 500 to 520 (AAIA…QPVL).

The protein belongs to the complex I subunit 2 family. NDH-1 is composed of 14 different subunits. Subunits NuoA, H, J, K, L, M, N constitute the membrane sector of the complex.

It localises to the cell membrane. It catalyses the reaction a quinone + NADH + 5 H(+)(in) = a quinol + NAD(+) + 4 H(+)(out). NDH-1 shuttles electrons from NADH, via FMN and iron-sulfur (Fe-S) centers, to quinones in the respiratory chain. The immediate electron acceptor for the enzyme in this species is believed to be a menaquinone. Couples the redox reaction to proton translocation (for every two electrons transferred, four hydrogen ions are translocated across the cytoplasmic membrane), and thus conserves the redox energy in a proton gradient. The polypeptide is NADH-quinone oxidoreductase subunit N (Mycobacterium bovis (strain ATCC BAA-935 / AF2122/97)).